Consider the following 71-residue polypeptide: Exodeoxyribonuclease 7 small subunit (71 aa).

This sequence belongs to the XseB family. In terms of assembly, heterooligomer composed of large and small subunits.

The protein localises to the cytoplasm. The enzyme catalyses Exonucleolytic cleavage in either 5'- to 3'- or 3'- to 5'-direction to yield nucleoside 5'-phosphates.. Its function is as follows. Bidirectionally degrades single-stranded DNA into large acid-insoluble oligonucleotides, which are then degraded further into small acid-soluble oligonucleotides. In Clostridium botulinum (strain Loch Maree / Type A3), this protein is Exodeoxyribonuclease 7 small subunit.